The chain runs to 161 residues: MPTDLHPDLAALAPLLGTWTGRGSGKYPTIQPFDYLEEVTFSHVGKPFLAYAQKTRAAADGKPLHAETGYLRVPQPGRLELVLAHPSGITEIEVGSYAVTGGLIEMRMSTTSIGLTPTAKEVTALGRWFRIDGDKLSYSVQMGAVGQPLQDHLAAVLHRQR.

The GXWXGXG signature appears at 17–23 (GTWTGRG). A heme b-binding site is contributed by H152.

It belongs to the nitrobindin family. Homodimer. It depends on heme b as a cofactor.

The catalysed reaction is peroxynitrite = nitrate. It participates in nitrogen metabolism. Functionally, heme-binding protein able to scavenge peroxynitrite and to protect free L-tyrosine against peroxynitrite-mediated nitration, by acting as a peroxynitrite isomerase that converts peroxynitrite to nitrate. Therefore, this protein likely plays a role in peroxynitrite sensing and in the detoxification of reactive nitrogen and oxygen species (RNS and ROS, respectively). Is able to bind nitric oxide (NO) in vitro, but may act as a sensor of peroxynitrite levels in vivo. The polypeptide is Peroxynitrite isomerase 2 (Mycobacterium avium (strain 104)).